The chain runs to 607 residues: Guanine nucleotide-binding protein-like 1 (607 aa).

Residues 1–14 show a composition bias toward basic residues; the sequence is MPRKKPFSVKQKKK. The tract at residues 1-81 is disordered; the sequence is MPRKKPFSVK…GPRGYDPNRY (81 aa). Basic and acidic residues predominate over residues 15–26; the sequence is QLQDKRERKRGL. 3 positions are modified to phosphoserine: Ser-32, Ser-33, and Ser-34. Phosphothreonine occurs at positions 48 and 50. Phosphoserine is present on residues Ser-51 and Ser-68. The region spanning 178-418 is the CP-type G domain; that stretch reads WRQLWRVLEM…LCDCPGLIFP (241 aa). 225-228 is a binding site for GTP; that stretch reads NKVD. Ser-324 is modified (phosphoserine). GTP is bound by residues 367-374 and 411-415; these read GFPNVGKS and DCPGL. The interval 547–607 is disordered; sequence GPAGDEEEEE…PYALLGEDEC (61 aa). Residues 550-584 are compositionally biased toward acidic residues; it reads GDEEEEEEEELSSSCEEEGEEDRDADEEGEGDEET. A phosphoserine mark is found at Ser-561, Ser-562, and Ser-563.

This sequence belongs to the TRAFAC class YlqF/YawG GTPase family.

Functionally, possible regulatory or functional link with the histocompatibility cluster. This Homo sapiens (Human) protein is Guanine nucleotide-binding protein-like 1 (GNL1).